Reading from the N-terminus, the 531-residue chain is Protein RPN4 (531 aa).

Positions 338–432 are disordered; sequence RFPSPSTSAN…PSAHTSSSDG (95 aa). A compositionally biased stretch (polar residues) spans 341 to 354; sequence SPSTSANVPSTATT. Positions 362 to 375 are enriched in low complexity; it reads SSSNRSCVSNSNEN. The short motif at 382–398 is the Nuclear localization signal element; sequence KKPTSAVVSSNASRRKL. The span at 394 to 407 shows a compositional bias: basic residues; that stretch reads SRRKLINYTKKHLS. Residues 408 to 430 show a composition bias toward low complexity; that stretch reads SHSSTNSNSKPSTASPSAHTSSS.

In terms of assembly, probably interacts with SEC63. Interacts with MUB1, UBR2 and RPN2. Post-translationally, ubiquitinated by UBR2 in the presence of UBC2; which leads to proteasomal degradation.

Its subcellular location is the nucleus. In terms of biological role, acts as a transcriptional activator of a number of genes encoding proteasomal subunits. Binds to a PACE (proteasome-associated control element) DNA sequence 5'-GGTGGCAAA-3'. Its expression is in turn regulated by the 26S proteasome, thereby providing a negative feedback control mechanism. Required for normal growth at low temperatures. The chain is Protein RPN4 (RPN4) from Saccharomyces cerevisiae (strain ATCC 204508 / S288c) (Baker's yeast).